The following is a 285-amino-acid chain: Release factor glutamine methyltransferase (285 aa).

Residues 124-128, aspartate 147, and asparagine 190 contribute to the S-adenosyl-L-methionine site; that span reads GTGSG. Residue 190-193 participates in substrate binding; it reads NPPY.

The protein belongs to the protein N5-glutamine methyltransferase family. PrmC subfamily.

It catalyses the reaction L-glutaminyl-[peptide chain release factor] + S-adenosyl-L-methionine = N(5)-methyl-L-glutaminyl-[peptide chain release factor] + S-adenosyl-L-homocysteine + H(+). Its function is as follows. Methylates the class 1 translation termination release factors RF1/PrfA and RF2/PrfB on the glutamine residue of the universally conserved GGQ motif. The polypeptide is Release factor glutamine methyltransferase (Flavobacterium psychrophilum (strain ATCC 49511 / DSM 21280 / CIP 103535 / JIP02/86)).